The sequence spans 335 residues: tRNA N6-adenosine threonylcarbamoyltransferase (335 aa).

Fe cation contacts are provided by His111 and His115. Substrate-binding positions include 133–137 (LISGG), Asp166, Gly179, and Asn276. A Fe cation-binding site is contributed by Asp301.

Belongs to the KAE1 / TsaD family. It depends on Fe(2+) as a cofactor.

The protein resides in the cytoplasm. It carries out the reaction L-threonylcarbamoyladenylate + adenosine(37) in tRNA = N(6)-L-threonylcarbamoyladenosine(37) in tRNA + AMP + H(+). In terms of biological role, required for the formation of a threonylcarbamoyl group on adenosine at position 37 (t(6)A37) in tRNAs that read codons beginning with adenine. Is involved in the transfer of the threonylcarbamoyl moiety of threonylcarbamoyl-AMP (TC-AMP) to the N6 group of A37, together with TsaE and TsaB. TsaD likely plays a direct catalytic role in this reaction. This chain is tRNA N6-adenosine threonylcarbamoyltransferase, found in Wolbachia sp. subsp. Brugia malayi (strain TRS).